The sequence spans 368 residues: F-box only protein 28 (368 aa).

The span at 1 to 11 (MAAASEERMAE) shows a compositional bias: basic and acidic residues. The segment at 1–56 (MAAASEERMAEEGGGGHGDGGSCSAAGSAQRQPPAPPSQAPPPGSQAPAAPALAPD) is disordered. Residues 12–21 (EGGGGHGDGG) show a composition bias toward gly residues. Residues 22-32 (SCSAAGSAQRQ) are compositionally biased toward low complexity. The segment covering 33-45 (PPAPPSQAPPPGS) has biased composition (pro residues). The span at 46–55 (QAPAAPALAP) shows a compositional bias: low complexity. An F-box domain is found at 61 to 109 (NNTLVALPIVAIENILSFMSYDEISQLRLVCKRMDLVCQRMLNQGFLKV). Ser235 and Ser242 each carry phosphoserine. A Phosphothreonine modification is found at Thr270. The tract at residues 328–368 (MESAVGTSSGSGQSEESPRKRRKATEAIDSLRKSKRLRNRK) is disordered. Position 344 is a phosphoserine (Ser344).

In terms of assembly, part of a SCF (SKP1-cullin-F-box) protein ligase complex.

It is found in the chromosome. It localises to the centromere. The protein resides in the kinetochore. Probably recognizes and binds to some phosphorylated proteins and promotes their ubiquitination and degradation. This chain is F-box only protein 28 (Fbxo28), found in Mus musculus (Mouse).